Reading from the N-terminus, the 751-residue chain is Polyribonucleotide nucleotidyltransferase (751 aa).

Asp-528 and Asp-534 together coordinate Mg(2+). In terms of domain architecture, KH spans Pro-594–Ile-653. In terms of domain architecture, S1 motif spans Gly-665–Val-737.

The protein belongs to the polyribonucleotide nucleotidyltransferase family. Mg(2+) is required as a cofactor.

Its subcellular location is the cytoplasm. It catalyses the reaction RNA(n+1) + phosphate = RNA(n) + a ribonucleoside 5'-diphosphate. Functionally, involved in mRNA degradation. Catalyzes the phosphorolysis of single-stranded polyribonucleotides processively in the 3'- to 5'-direction. In Kocuria rhizophila (strain ATCC 9341 / DSM 348 / NBRC 103217 / DC2201), this protein is Polyribonucleotide nucleotidyltransferase.